The primary structure comprises 545 residues: Glucose-6-phosphate isomerase (545 aa).

Glu-351 serves as the catalytic Proton donor. Active-site residues include His-382 and Lys-510.

Belongs to the GPI family.

It localises to the cytoplasm. It carries out the reaction alpha-D-glucose 6-phosphate = beta-D-fructose 6-phosphate. It functions in the pathway carbohydrate biosynthesis; gluconeogenesis. It participates in carbohydrate degradation; glycolysis; D-glyceraldehyde 3-phosphate and glycerone phosphate from D-glucose: step 2/4. Functionally, catalyzes the reversible isomerization of glucose-6-phosphate to fructose-6-phosphate. This Helicobacter pylori (strain J99 / ATCC 700824) (Campylobacter pylori J99) protein is Glucose-6-phosphate isomerase.